The following is a 156-amino-acid chain: Arginine repressor (156 aa).

This sequence belongs to the ArgR family.

The protein resides in the cytoplasm. It participates in amino-acid biosynthesis; L-arginine biosynthesis [regulation]. In terms of biological role, regulates arginine biosynthesis genes. The sequence is that of Arginine repressor from Erwinia tasmaniensis (strain DSM 17950 / CFBP 7177 / CIP 109463 / NCPPB 4357 / Et1/99).